The sequence spans 689 residues: Methionine--tRNA ligase (689 aa).

Residues 15 to 25 carry the 'HIGH' region motif; sequence PYANGPVHIGH. 4 residues coordinate Zn(2+): Cys147, Cys150, Cys160, and Cys163. A 'KMSKS' region motif is present at residues 342–346; sequence KISTS. ATP is bound at residue Thr345. Residues 588-689 enclose the tRNA-binding domain; that stretch reads DFAKMDIRVA…AVVNAGSMIG (102 aa).

The protein belongs to the class-I aminoacyl-tRNA synthetase family. MetG type 1 subfamily. Homodimer. Zn(2+) serves as cofactor.

The protein localises to the cytoplasm. The enzyme catalyses tRNA(Met) + L-methionine + ATP = L-methionyl-tRNA(Met) + AMP + diphosphate. Is required not only for elongation of protein synthesis but also for the initiation of all mRNA translation through initiator tRNA(fMet) aminoacylation. The polypeptide is Methionine--tRNA ligase (Cytophaga hutchinsonii (strain ATCC 33406 / DSM 1761 / CIP 103989 / NBRC 15051 / NCIMB 9469 / D465)).